The primary structure comprises 332 residues: MAEYEVIVIGGGPVGLFGTFYSGLRDMKVLLIDSQDELGGQLVTLYPEKMVYDVGGFAGIQAYDLAQRLIEQAKMFGPDIRTREWADTLEKTQDGMWVVKTDKGGEYKTKTVMIAAGIGKITPSRLGAKGEVEYENKGVYYTVRRKSEFQGKRVLIVGGGDSAVDWALTLAPIAKEVTLIHRRDQFRAHERSVKEMFEVAKVYTWHELKEVKGDGNRVTQAIIFDNRTKEEKTLNVDAVIISIGHKGDLGNMLKWGLNMKGRDIVVNGKMETNLPGVYAVGDIASVEGMPKLALIAVGFGQAAIASSVAKKYVDPNASVFAGHSSEMDKFKK.

Aspartate 33, glutamine 41, tyrosine 46, alanine 86, isoleucine 121, aspartate 282, and serine 325 together coordinate FAD.

Belongs to the ferredoxin--NADP reductase type 2 family. As to quaternary structure, homodimer. It depends on FAD as a cofactor.

The enzyme catalyses 2 reduced [2Fe-2S]-[ferredoxin] + NADP(+) + H(+) = 2 oxidized [2Fe-2S]-[ferredoxin] + NADPH. The protein is Ferredoxin--NADP reductase of Metallosphaera sedula (strain ATCC 51363 / DSM 5348 / JCM 9185 / NBRC 15509 / TH2).